A 357-amino-acid polypeptide reads, in one-letter code: Histidinol-phosphate aminotransferase (357 aa).

Lys212 is subject to N6-(pyridoxal phosphate)lysine.

Belongs to the class-II pyridoxal-phosphate-dependent aminotransferase family. Histidinol-phosphate aminotransferase subfamily. Homodimer. Pyridoxal 5'-phosphate serves as cofactor.

The enzyme catalyses L-histidinol phosphate + 2-oxoglutarate = 3-(imidazol-4-yl)-2-oxopropyl phosphate + L-glutamate. It functions in the pathway amino-acid biosynthesis; L-histidine biosynthesis; L-histidine from 5-phospho-alpha-D-ribose 1-diphosphate: step 7/9. The sequence is that of Histidinol-phosphate aminotransferase from Pectobacterium carotovorum subsp. carotovorum (strain PC1).